The primary structure comprises 35 residues: Photosystem II reaction center protein T (35 aa).

Residues 3–23 (ALVYTFLLVSTLGIIFFAIFF) traverse the membrane as a helical segment.

Belongs to the PsbT family. As to quaternary structure, PSII is composed of 1 copy each of membrane proteins PsbA, PsbB, PsbC, PsbD, PsbE, PsbF, PsbH, PsbI, PsbJ, PsbK, PsbL, PsbM, PsbT, PsbY, PsbZ, Psb30/Ycf12, at least 3 peripheral proteins of the oxygen-evolving complex and a large number of cofactors. It forms dimeric complexes.

It is found in the plastid. It localises to the chloroplast thylakoid membrane. In terms of biological role, found at the monomer-monomer interface of the photosystem II (PS II) dimer, plays a role in assembly and dimerization of PSII. PSII is a light-driven water plastoquinone oxidoreductase, using light energy to abstract electrons from H(2)O, generating a proton gradient subsequently used for ATP formation. This Metasequoia glyptostroboides (Dawn redwood) protein is Photosystem II reaction center protein T.